Consider the following 310-residue polypeptide: Transcription factor UNE12 (310 aa).

Disordered stretches follow at residues 124–156 and 229–253; these read HGQPMQQPPPSAPHQPTSIRPRVRARRGQATDP and SSSVEDETGEGGRTPQPAWEKWSND. Positions 152–201 constitute a bHLH domain; sequence QATDPHSIAERLRRERIAERIRALQELVPTVNKTDRAAMIDEIVDYVKFL.

In terms of assembly, homodimer. Expressed constitutively in roots, leaves, stems, and flowers.

The protein resides in the nucleus. Functionally, required for ovule fertilization. This Arabidopsis thaliana (Mouse-ear cress) protein is Transcription factor UNE12 (UNE12).